Here is a 40-residue protein sequence, read N- to C-terminus: Submaxillary gland androgen-regulated protein 2, isoform epsilon (40 aa).

The signal sequence occupies residues 1–20 (MKALYMVFVLWVLIGCFLRC).

It localises to the secreted. Functionally, may play a role in protection or detoxification. In Mus musculus (Mouse), this protein is Submaxillary gland androgen-regulated protein 2, isoform epsilon (Smr2).